A 181-amino-acid polypeptide reads, in one-letter code: Adenylate kinase (181 aa).

10 to 15 contacts ATP; that stretch reads GAGKGT. Residues 30 to 59 form an NMP region; the sequence is STGDLFRSNISEGTELGLQAKQYLDAGDLV. AMP contacts are provided by residues Thr-31, Arg-36, 57-59, 85-88, and Gln-92; these read DLV and GFPR. The LID stretch occupies residues 126–132; that stretch reads GRGRADD. Arg-127 serves as a coordination point for ATP. 2 residues coordinate AMP: Arg-129 and Arg-140. Residue Gly-166 coordinates ATP.

This sequence belongs to the adenylate kinase family. Monomer.

The protein localises to the cytoplasm. The enzyme catalyses AMP + ATP = 2 ADP. The protein operates within purine metabolism; AMP biosynthesis via salvage pathway; AMP from ADP: step 1/1. Catalyzes the reversible transfer of the terminal phosphate group between ATP and AMP. Plays an important role in cellular energy homeostasis and in adenine nucleotide metabolism. The protein is Adenylate kinase of Mycobacteroides abscessus (strain ATCC 19977 / DSM 44196 / CCUG 20993 / CIP 104536 / JCM 13569 / NCTC 13031 / TMC 1543 / L948) (Mycobacterium abscessus).